The sequence spans 221 residues: Adenylate kinase (221 aa).

10 to 15 (GAGKGT) is an ATP binding site. The segment at 30–59 (STGDMLRAAVKAGTPLGLEAKRYMDAGELV) is NMP. AMP is bound by residues Thr31, Arg36, 57–59 (ELV), 85–88 (GFPR), and Gln92. An LID region spans residues 122–159 (GRRMHPASGRTYHVKFNPPKVEGVDDVTGEPLIQRDDD). Residues Arg123 and 132–133 (TY) each bind ATP. 2 residues coordinate AMP: Arg156 and Arg167. Residue Gly207 participates in ATP binding.

It belongs to the adenylate kinase family. In terms of assembly, monomer.

The protein resides in the cytoplasm. The catalysed reaction is AMP + ATP = 2 ADP. Its pathway is purine metabolism; AMP biosynthesis via salvage pathway; AMP from ADP: step 1/1. Its function is as follows. Catalyzes the reversible transfer of the terminal phosphate group between ATP and AMP. Plays an important role in cellular energy homeostasis and in adenine nucleotide metabolism. The protein is Adenylate kinase of Paraburkholderia phymatum (strain DSM 17167 / CIP 108236 / LMG 21445 / STM815) (Burkholderia phymatum).